The chain runs to 115 residues: Colicin-Ib immunity protein (115 aa).

Helical transmembrane passes span 7–27 (VKYL…FYLG), 38–58 (FYAF…MRII), and 87–107 (IFEL…LIFI).

It localises to the cell membrane. Functionally, this protein is able to protect a cell, which harbors the plasmid IncI1 ColIb-P9 encoding colicin Ib, against colicin Ib. The polypeptide is Colicin-Ib immunity protein (Escherichia coli).